Reading from the N-terminus, the 299-residue chain is Cathepsin B-like CP3 (299 aa).

The N-terminal stretch at 1 to 19 (MKLFLLAAAAFSAPALTVS) is a signal peptide. 3 disulfides stabilise this stretch: Cys87-Cys114, Cys97-Cys140, and Cys133-Cys176. Cys100 is a catalytic residue. Catalysis depends on residues His244 and Asn265.

This sequence belongs to the peptidase C1 family.

It is found in the vacuole. Functionally, thiol protease which is required for parasite excystation and invasion of the proximal small intestine of the human host. This is Cathepsin B-like CP3 (CP3) from Giardia intestinalis (Giardia lamblia).